The sequence spans 740 residues: Eukaryotic translation initiation factor 3 subunit B (740 aa).

Positions 1–10 (MAPSFDTLSE) are enriched in polar residues. The tract at residues 1 to 20 (MAPSFDTLSEQDLHEEEEEE) is disordered. Positions 40–126 (TFVVIDGLPV…HTLLVNKLMD (87 aa)) constitute an RRM domain. WD repeat units follow at residues 193–230 (AHWT…KQKQ), 232–289 (PHPF…RSFV), 302–343 (EPKK…LLGK), 455–496 (SLKD…SFFA), 513–556 (IEKK…EKPE), and 571–609 (IEHY…HTFA). Residues 695–721 (DAYGLPEEADDPKLAKDAAATTQEQGE) are disordered.

Belongs to the eIF-3 subunit B family. Component of the eukaryotic translation initiation factor 3 (eIF-3) complex.

The protein resides in the cytoplasm. In terms of biological role, RNA-binding component of the eukaryotic translation initiation factor 3 (eIF-3) complex, which is involved in protein synthesis of a specialized repertoire of mRNAs and, together with other initiation factors, stimulates binding of mRNA and methionyl-tRNAi to the 40S ribosome. The eIF-3 complex specifically targets and initiates translation of a subset of mRNAs involved in cell proliferation. The protein is Eukaryotic translation initiation factor 3 subunit B (prt1) of Neosartorya fischeri (strain ATCC 1020 / DSM 3700 / CBS 544.65 / FGSC A1164 / JCM 1740 / NRRL 181 / WB 181) (Aspergillus fischerianus).